Here is a 1216-residue protein sequence, read N- to C-terminus: MSRLLWKKVAGAKVASGPVPATGRWVSSSVLDPVPSDGQPQSQMPSSENGQLRLNPLHIQMLSRGLHEQIFGCGGDVPDEAAVQRSIEHLRKHGLWGQPTTPLPDVQLRLPRLFGGNLDQHFRLLAQKQSLPYLEAAASLSEAQLPPQPRKWVWAEGWTRYGPEGEAEPVAIPEERALVFDVEVCLAEGTCPTLAVAISPSAWYSWCSRRLVEERYSWTSQLSPADLIPLGVSASASSSTQQDWQEQLVVGHNVSFDRAHIREQYLIQGSRMRFLDTMSMHMAISGLSSFQRSLWMGAKQGKHKTQHPTKRGQKSQKNANGPAISSWDWMDISSANNLADVHNLYVGGPRLAKEPRELFVKGSMRDIRENFQDLMEYCARDVWATFEVFQQQLPLFLERCPHPVTLAGMLEMGVSYLPVNQNWERYLTEAQSTYEELQREMKKSLMELANDACQLLSGERYKEDPWLWDLEWDLQEFKQKKAKKVKKTASASKLPIEGAGPFGDPMDQEDPGPPSEEEELQQNIMAHTRLQQLKSTTDLLPKRPQHLPGHPGWYRKLCPRLDDPAWTPGPSLLSLQMRVTPKLMALTWDGFPLHYSDSHGWGYLVPGRRDNLTELPVSPTEESAAVTCPYRAIESLYRRHCLDQGKQQLETQETDLAEEFLLTDSAMWQTVEELGCLDVEAEATVESSGLSQPLVPPTACAPKTSQPTYHHGNGPYNDVDIPGCWFFKLPHKDGNNYNVGSPFAKDFLPKMEDGTLQAGPGGARGPRALEINKMISFWRNAHKRISSQMVVWLPRSALPRAVTRHPSFDEESHYGAILPQVVTAGTITRRAVEPTWLTASNARPDRVGSELKAMVQAPPGYVLVGADVDSQELWIAAVLGDAHFAGMHGCTAFGWMTLQGRKSRGTDLHSKTAATVGISREHAKVFNYGRIYGAGQSFAERLLMQFNHRLSRQEAADKAQQMYAVTKGLRRYRLSDDGEWLVKQLNVPVDRTEDGWVSLQDLRKIRREASRKSRWKKWEVVTERAWTGGTESEMFNKLESIAMSDTPRTPVLGCCISRALEPSVVQGEFMTSRVNWVVQSSAVDYLHLMLVAMKWLFEEFAIDGRFCISIHDEVRYLVREEDRYRAALALQITNLLTRCMFAYKLGLNDLPQSVAFFSAVDIDQCLRKEVTMDCKTPSNPTGMERKYGIPQGEALDIYQIIELTKGSLEKRSQPGP.

Low complexity predominate over residues Ser27 to Asp37. The disordered stretch occupies residues Ser27–Gly50. Residues Gly38–Gly50 are compositionally biased toward polar residues. The Exo I motif lies at Val179–Glu183. Asp181 acts as the Exonuclease activity in catalysis. Residues Val250–Arg258 carry the Exo II motif. DNA is bound at residue Ser289. A compositionally biased stretch (basic residues) spans Gly301–Lys314. The disordered stretch occupies residues Gly301–Gly321. The Exo III motif lies at Tyr377 to Thr385. Residues Thr488 to Glu518 are disordered. The interval Ala491–Gly552 is accessory-interacting determinant. Acidic residues predominate over residues Met506–Glu518. Arg560 lines the RNA pocket. A DNA-binding site is contributed by Ser574. 3 residues coordinate RNA: His731, Gly740, and Lys745. DNA-binding residues include Lys783 and Thr826. The trigger loop stretch occupies residues Thr835 to Asn841. Ser840 and Arg846 together coordinate RNA. Positions Val864–Leu873 match the Pol A motif. Asp867, Val868, Ser870, Glu872, Arg920, Lys924, and Tyr928 together coordinate a 2'-deoxyribonucleoside 5'-triphosphate. Mg(2+) contacts are provided by Asp867 and Val868. The Pol B signature appears at Arg920–Gly935. DNA is bound by residues Thr1071 and Ser1072. The short motif at His1111–Val1118 is the Pol C element. An a 2'-deoxyribonucleoside 5'-triphosphate-binding site is contributed by Asp1112. Asp1112 provides a ligand contact to Mg(2+).

This sequence belongs to the DNA polymerase type-A family. Heterotrimer composed of a catalytic subunit and a homodimer of accessory subunits (POLG:POLG2). Interacts with TTC3. Interacts with LIG3. It depends on Mg(2+) as a cofactor.

It is found in the mitochondrion. The protein localises to the mitochondrion matrix. It localises to the mitochondrion nucleoid. It carries out the reaction DNA(n) + a 2'-deoxyribonucleoside 5'-triphosphate = DNA(n+1) + diphosphate. The catalysed reaction is a 3'-end 2'-deoxyribonucleotidyl-deoxyribonucleotide-DNA + H2O = a 3'-end 2'-deoxyribonucleotide-DNA + a 2'-deoxyribonucleoside 5'-phosphate + H(+). The enzyme catalyses a 5'-end 2'-deoxyribose-2'-deoxyribonucleotide-DNA = (2E,4S)-4-hydroxypenten-2-al-5-phosphate + a 5'-end 5'-phospho-2'-deoxyribonucleoside-DNA + H(+). Its activity is regulated as follows. Inhibited by dideoxynucleotides such as antiviral agent zalcitabine. Catalytic subunit of DNA polymerase gamma solely responsible for replication of mitochondrial DNA (mtDNA). Replicates both heavy and light strands of the circular mtDNA genome using a single-stranded DNA template, RNA primers and the four deoxyribonucleoside triphosphates as substrates. Has 5' -&gt; 3' polymerase activity. Functionally interacts with TWNK and SSBP1 at the replication fork to form a highly processive replisome, where TWNK unwinds the double-stranded DNA template prior to replication and SSBP1 covers the parental heavy strand to enable continuous replication of the entire mitochondrial genome. A single nucleotide incorporation cycle includes binding of the incoming nucleotide at the insertion site, a phosphodiester bond formation reaction that extends the 3'-end of the primer DNA, and translocation of the primer terminus to the post-insertion site. After completing replication of a mtDNA strand, mediates 3' -&gt; 5' exonucleolytic degradation at the nick to enable proper ligation. Highly accurate due to high nucleotide selectivity and 3' -&gt; 5' exonucleolytic proofreading. Proficiently corrects base substitutions, single-base additions and deletions in non-repetitive sequences and short repeats, but displays lower proofreading activity when replicating longer homopolymeric stretches. Exerts exonuclease activity toward single-stranded DNA and double-stranded DNA containing 3'-terminal mispairs. When a misincorporation occurs, transitions from replication to a pro-nucleolytic editing mode and removes the missincorporated nucleoside in the exonuclease active site. Proceeds via an SN2 nucleolytic mechanism in which Asp-198 catalyzes phosphodiester bond hydrolysis and Glu-200 stabilizes the leaving group. As a result the primer strand becomes one nucleotide shorter and is positioned in the post-insertion site, ready to resume DNA synthesis. Exerts 5'-deoxyribose phosphate (dRP) lyase activity and mediates repair-associated mtDNA synthesis (gap filling) in base-excision repair pathway. Catalyzes the release of the 5'-terminal 2-deoxyribose-5-phosphate sugar moiety from incised apurinic/apyrimidinic (AP) sites to produce a substrate for DNA ligase. The dRP lyase reaction does not require divalent metal ions and likely proceeds via a Schiff base intermediate in a beta-elimination reaction mechanism. In Rattus norvegicus (Rat), this protein is DNA polymerase subunit gamma-1.